Consider the following 148-residue polypeptide: Lysozyme C (148 aa).

An N-terminal signal peptide occupies residues 1 to 18; it reads MKVLIILGLVLLSVMVQG. Positions 19–148 constitute a C-type lysozyme domain; it reads KVFERCELAR…VSQYVQGCGV (130 aa). Cystine bridges form between Cys-24–Cys-146, Cys-48–Cys-134, Cys-83–Cys-99, and Cys-95–Cys-113. Residues Glu-53 and Asp-71 contribute to the active site.

The protein belongs to the glycosyl hydrolase 22 family. In terms of assembly, monomer.

It catalyses the reaction Hydrolysis of (1-&gt;4)-beta-linkages between N-acetylmuramic acid and N-acetyl-D-glucosamine residues in a peptidoglycan and between N-acetyl-D-glucosamine residues in chitodextrins.. In terms of biological role, lysozymes have primarily a bacteriolytic function; those in tissues and body fluids are associated with the monocyte-macrophage system and enhance the activity of immunoagents. The protein is Lysozyme C (LYZ) of Callithrix jacchus (White-tufted-ear marmoset).